Consider the following 280-residue polypeptide: Meiotic driver wtf35 (280 aa).

Positions 1 to 29 (MKNKDYPLRTSMDELSTKNDNEIDLEKGP) are enriched in basic and acidic residues. 2 disordered regions span residues 1–49 (MKNK…DLNN) and 64–100 (NKSTTPPDYDENRLPITDEGNNPPNTHRENHSSGTTD). 4 helical membrane-spanning segments follow: residues 105–125 (FLIKLLISFTSIILFNAPAVC), 142–162 (WTLIGFWCASSLIIFTFSWYF), 184–204 (IPMAFSEVFLFNILVGSPRVA), and 218–238 (SLADHIIFAILSILVFIVETV).

Belongs to the WTF family. Homomer. Forms protein aggregates. The two isoforms can interact with each other and with themselves. High sequence similarity is required for their interaction.

It is found in the spore membrane. The protein localises to the vacuole membrane. Its subcellular location is the ascus epiplasm. The protein resides in the cytoplasm. It localises to the endoplasmic reticulum membrane. Its function is as follows. Promotes unequal transmission of alleles from the parental zygote to progeny spores by acting as poison/antidote system where the poison and antidote proteins are produced from the same locus; the poison component is trans-acting and targets all spores within an ascus whereas the antidote component is spore-specific, leading to poisoning of all progeny that do not inherit the allele. Functionally, localizes isoform 2 to the vacuole thereby facilitating its degradation. In terms of biological role, forms toxic aggregates that disrupt spore maturation. This chain is Meiotic driver wtf35, found in Schizosaccharomyces pombe (Fission yeast).